Here is a 125-residue protein sequence, read N- to C-terminus: Large ribosomal subunit protein bL12 (125 aa).

Belongs to the bacterial ribosomal protein bL12 family. In terms of assembly, homodimer. Part of the ribosomal stalk of the 50S ribosomal subunit. Forms a multimeric L10(L12)X complex, where L10 forms an elongated spine to which 2 to 4 L12 dimers bind in a sequential fashion. Binds GTP-bound translation factors.

In terms of biological role, forms part of the ribosomal stalk which helps the ribosome interact with GTP-bound translation factors. Is thus essential for accurate translation. This Variovorax paradoxus (strain S110) protein is Large ribosomal subunit protein bL12.